Here is a 455-residue protein sequence, read N- to C-terminus: Beta-1,3-galactosyl-O-glycosyl-glycoprotein beta-1,6-N-acetylglucosaminyltransferase 4 (455 aa).

Over 1–13 (MKIFRCCFKYTLQ) the chain is Cytoplasmic. A helical; Signal-anchor for type II membrane protein membrane pass occupies residues 14–34 (QKLFILLLTLWLFSLLKLLNV). Over 35–455 (GRLLFPQRDI…TEGTRQSHTL (421 aa)) the chain is Lumenal. The N-linked (GlcNAc...) asparagine glycan is linked to Asn73. Disulfide bonds link Cys74–Cys228, Cys162–Cys383, Cys183–Cys210, and Cys392–Cys424. Residues Asn287 and Asn382 are each glycosylated (N-linked (GlcNAc...) asparagine).

Belongs to the glycosyltransferase 14 family.

The protein localises to the golgi apparatus membrane. The enzyme catalyses a 3-O-[beta-D-galactosyl-(1-&gt;3)-N-acetyl-alpha-D-galactosaminyl]-L-seryl-[protein] + UDP-N-acetyl-alpha-D-glucosamine = 3-O-{beta-D-galactosyl-(1-&gt;3)-[N-acetyl-beta-D-glucosaminyl-(1-&gt;6)]-N-acetyl-alpha-D-galactosaminyl}-L-seryl-[protein] + UDP + H(+). It carries out the reaction a 3-O-[beta-D-galactosyl-(1-&gt;3)-N-acetyl-alpha-D-galactosaminyl]-L-threonyl-[protein] + UDP-N-acetyl-alpha-D-glucosamine = a 3-O-{beta-D-galactosyl-(1-&gt;3)-[N-acetyl-beta-D-glucosaminyl-(1-&gt;6)]-N-acetyl-alpha-D-galactosaminyl}-L-threonyl-[protein] + UDP + H(+). It functions in the pathway protein modification; protein glycosylation. Glycosyltransferase that mediates core 2 O-glycan branching, an important step in mucin-type biosynthesis. Does not have core 4 O-glycan or I-branching enzyme activity. This Mus musculus (Mouse) protein is Beta-1,3-galactosyl-O-glycosyl-glycoprotein beta-1,6-N-acetylglucosaminyltransferase 4 (Gcnt4).